Here is a 336-residue protein sequence, read N- to C-terminus: MPAINVGIIGVSGYTGFELIRLLLAHPNFKMSYLAASSEAKIDEIFPSLRGVLDLDVHRADAKEAAKRCEVVFLALPHQEAMRYAKQLLSLGVKVVDLSADYRLSRELYEKNYCEHLDVQNLARAVYGLVELNRERIKGANLVANPGCYPTASILAVLPFLKFIDLDFGVVIDAKSGVSGAGKKLSASSHFVSVNENANAYNPINHRHADEIKFHLSNAAGSDISTLFVPHLLPITRGMLVSAYARLVKDIKPLEVLGEFYKNERFIRVRDEAVQIKNVAGTHFCDITAFAHEGKIFINSAIDNLLRGASSQAIANANLMCGLDENLALPMISQFC.

Cys148 is a catalytic residue.

This sequence belongs to the NAGSA dehydrogenase family. Type 1 subfamily.

Its subcellular location is the cytoplasm. The catalysed reaction is N-acetyl-L-glutamate 5-semialdehyde + phosphate + NADP(+) = N-acetyl-L-glutamyl 5-phosphate + NADPH + H(+). It functions in the pathway amino-acid biosynthesis; L-arginine biosynthesis; N(2)-acetyl-L-ornithine from L-glutamate: step 3/4. Functionally, catalyzes the NADPH-dependent reduction of N-acetyl-5-glutamyl phosphate to yield N-acetyl-L-glutamate 5-semialdehyde. This is N-acetyl-gamma-glutamyl-phosphate reductase from Campylobacter curvus (strain 525.92).